The chain runs to 67 residues: Large ribosomal subunit protein bL35 (67 aa).

The protein belongs to the bacterial ribosomal protein bL35 family.

The protein is Large ribosomal subunit protein bL35 of Bartonella henselae (strain ATCC 49882 / DSM 28221 / CCUG 30454 / Houston 1) (Rochalimaea henselae).